The primary structure comprises 670 residues: Methionine--tRNA ligase (670 aa).

The 'HIGH' region motif lies at 14 to 24; that stretch reads PYANGHLHLGH. 4 residues coordinate Zn(2+): cysteine 145, cysteine 148, cysteine 158, and cysteine 161. The 'KMSKS' region motif lies at 330–334; sequence KMSKS. ATP is bound at residue lysine 333. Positions 570–670 constitute a tRNA-binding domain; that stretch reads DFAKVDLRIA…AGALPGMKVK (101 aa).

The protein belongs to the class-I aminoacyl-tRNA synthetase family. MetG type 1 subfamily. In terms of assembly, homodimer. Requires Zn(2+) as cofactor.

It localises to the cytoplasm. The enzyme catalyses tRNA(Met) + L-methionine + ATP = L-methionyl-tRNA(Met) + AMP + diphosphate. Is required not only for elongation of protein synthesis but also for the initiation of all mRNA translation through initiator tRNA(fMet) aminoacylation. The sequence is that of Methionine--tRNA ligase from Legionella pneumophila subsp. pneumophila (strain Philadelphia 1 / ATCC 33152 / DSM 7513).